Reading from the N-terminus, the 383-residue chain is Cell division protein FtsZ (383 aa).

GTP-binding positions include G20–N24, G107–G109, E138, R142, and N186.

It belongs to the FtsZ family. In terms of assembly, homodimer. Polymerizes to form a dynamic ring structure in a strictly GTP-dependent manner. Interacts directly with several other division proteins.

The protein localises to the cytoplasm. Its function is as follows. Essential cell division protein that forms a contractile ring structure (Z ring) at the future cell division site. The regulation of the ring assembly controls the timing and the location of cell division. One of the functions of the FtsZ ring is to recruit other cell division proteins to the septum to produce a new cell wall between the dividing cells. Binds GTP and shows GTPase activity. The polypeptide is Cell division protein FtsZ (Escherichia coli O157:H7).